A 307-amino-acid chain; its full sequence is DNA damage tolerance protein rad31 (307 aa).

Functionally, could be involved in a ubiquitin-related process important for DNA damage tolerance. Acts in a process which is defective in the checkpoint rad mutants and which involves hus5. The protein is DNA damage tolerance protein rad31 (rad31) of Schizosaccharomyces pombe (strain 972 / ATCC 24843) (Fission yeast).